Here is a 132-residue protein sequence, read N- to C-terminus: Small ribosomal subunit protein uS9 (132 aa).

Belongs to the universal ribosomal protein uS9 family.

The chain is Small ribosomal subunit protein uS9 from Blochmanniella pennsylvanica (strain BPEN).